Reading from the N-terminus, the 382-residue chain is Glycerate kinase (382 aa).

It belongs to the glycerate kinase type-1 family.

The catalysed reaction is (R)-glycerate + ATP = (2R)-3-phosphoglycerate + ADP + H(+). The protein is Glycerate kinase (glxK) of Bacillus subtilis (strain 168).